Here is a 678-residue protein sequence, read N- to C-terminus: Probable 3',5'-cyclic phosphodiesterase pde-3 (678 aa).

Disordered regions lie at residues 1–27, 52–95, and 223–250; these read MSPG…FQPT, AEMR…VLGG, and TVPA…NEHE. Residues 7–19 show a composition bias toward low complexity; sequence AVGGVSPPVMVPG. Polar residues-rich tracts occupy residues 60 to 85 and 231 to 246; these read TATS…NSGV and ARSS…PSNN. The 352-residue stretch at 281–632 folds into the PDEase domain; that stretch reads RYDTRELDTD…RKWKEQIELE (352 aa). His-356 functions as the Proton donor in the catalytic mechanism. Residues His-360, His-421, Asp-422, and Asp-531 each coordinate a divalent metal cation. Residues 654–678 are disordered; sequence EEESASTSDSPDPRRDSPLDSDLSQ.

The protein belongs to the cyclic nucleotide phosphodiesterase family. Requires a divalent metal cation as cofactor.

It catalyses the reaction a nucleoside 3',5'-cyclic phosphate + H2O = a nucleoside 5'-phosphate + H(+). This is Probable 3',5'-cyclic phosphodiesterase pde-3 (pde-3) from Caenorhabditis elegans.